The following is a 248-amino-acid chain: Probable transcriptional regulatory protein MYPE8020 (248 aa).

It belongs to the TACO1 family.

It localises to the cytoplasm. The protein is Probable transcriptional regulatory protein MYPE8020 of Malacoplasma penetrans (strain HF-2) (Mycoplasma penetrans).